We begin with the raw amino-acid sequence, 104 residues long: Phosphoribosyl-ATP pyrophosphatase (104 aa).

It belongs to the PRA-PH family.

It is found in the cytoplasm. The enzyme catalyses 1-(5-phospho-beta-D-ribosyl)-ATP + H2O = 1-(5-phospho-beta-D-ribosyl)-5'-AMP + diphosphate + H(+). It functions in the pathway amino-acid biosynthesis; L-histidine biosynthesis; L-histidine from 5-phospho-alpha-D-ribose 1-diphosphate: step 2/9. This is Phosphoribosyl-ATP pyrophosphatase from Streptococcus gordonii (strain Challis / ATCC 35105 / BCRC 15272 / CH1 / DL1 / V288).